A 203-amino-acid polypeptide reads, in one-letter code: Phosphatidylglycerophosphatase B (203 aa).

Position 1 (M1) is a topological domain, cytoplasmic. The helical transmembrane segment at 2 to 17 threads the bilayer; that stretch reads YKPVSLFLFFLILAAA. Residues 18–55 lie on the Extracellular side of the membrane; it reads IHTNAVQSADEAISKAAVLIRQPWLNEVMTGITHLGAS. A helical transmembrane segment spans residues 56 to 74; that stretch reads SFLLPLIVIIGAGMFFYRK. Residues 75–78 lie on the Cytoplasmic side of the membrane; sequence TWDG. Residues 79-99 traverse the membrane as a helical segment; sequence LLMLLVFGTDRLLNKVLKEWI. The tract at residues 96 to 104 is phosphatase sequence motif I; the sequence is KEWIERVRP. At 100-119 the chain is on the extracellular side; sequence ERVRPDFAPLVHESSFSFPS. Residues 118 to 121 form a phosphatase sequence motif II region; the sequence is PSGH. A helical transmembrane segment spans residues 120–139; sequence GHSMNAACVYPVIAYFLVKH. H121 (proton donors) is an active-site residue. Residues 140–146 lie on the Cytoplasmic side of the membrane; sequence LPFLSKH. Residues 147–167 traverse the membrane as a helical segment; the sequence is KKMVYIIAGVIAVLVGISRVY. Positions 164 to 175 are phosphatase sequence motif III; that stretch reads SRVYLGVHFVTD. Residues 168-172 lie on the Extracellular side of the membrane; it reads LGVHF. The Nucleophile role is filled by H171. Residues 173 to 196 form a helical membrane-spanning segment; that stretch reads VTDVLGGFSLGLLLFFLVKGFDEK. The Cytoplasmic segment spans residues 197-203; it reads IKRFRQK.

This sequence belongs to the PA-phosphatase related phosphoesterase family.

It is found in the cell membrane. It catalyses the reaction a 1,2-diacyl-sn-glycero-3-phospho-(1'-sn-glycero-3'-phosphate) + H2O = a 1,2-diacyl-sn-glycero-3-phospho-(1'-sn-glycerol) + phosphate. Its function is as follows. Catalyzes the dephosphorylation of phosphatidylglycerophosphate (PGP) to phosphatidylglycerol. Also has undecaprenyl pyrophosphate phosphatase activity, required for the biosynthesis of the lipid carrier undecaprenyl phosphate. The protein is Phosphatidylglycerophosphatase B of Bacillus subtilis (strain 168).